Consider the following 145-residue polypeptide: uncharacterized protein (145 aa).

3 helical membrane passes run 3-23, 83-103, and 105-125; these read VGII…GIGG, YVID…YLVP, and LSLL…MLWI.

The protein resides in the cell membrane. This is an uncharacterized protein from Methanocaldococcus jannaschii (strain ATCC 43067 / DSM 2661 / JAL-1 / JCM 10045 / NBRC 100440) (Methanococcus jannaschii).